The following is a 97-amino-acid chain: Aspartyl/glutamyl-tRNA(Asn/Gln) amidotransferase subunit C (97 aa).

The protein belongs to the GatC family. As to quaternary structure, heterotrimer of A, B and C subunits.

The catalysed reaction is L-glutamyl-tRNA(Gln) + L-glutamine + ATP + H2O = L-glutaminyl-tRNA(Gln) + L-glutamate + ADP + phosphate + H(+). It catalyses the reaction L-aspartyl-tRNA(Asn) + L-glutamine + ATP + H2O = L-asparaginyl-tRNA(Asn) + L-glutamate + ADP + phosphate + 2 H(+). Functionally, allows the formation of correctly charged Asn-tRNA(Asn) or Gln-tRNA(Gln) through the transamidation of misacylated Asp-tRNA(Asn) or Glu-tRNA(Gln) in organisms which lack either or both of asparaginyl-tRNA or glutaminyl-tRNA synthetases. The reaction takes place in the presence of glutamine and ATP through an activated phospho-Asp-tRNA(Asn) or phospho-Glu-tRNA(Gln). The polypeptide is Aspartyl/glutamyl-tRNA(Asn/Gln) amidotransferase subunit C (Synechococcus sp. (strain CC9902)).